A 28-amino-acid chain; its full sequence is Antibacterial protein LC3 (28 aa).

Antibacterial activity against X.campestris, especially strain G, and P.solacearum PO1. In Bacillus subtilis, this protein is Antibacterial protein LC3.